We begin with the raw amino-acid sequence, 34 residues long: Cuticle protein 9 (34 aa).

The chain is Cuticle protein 9 from Blaberus craniifer (Death's head cockroach).